The chain runs to 257 residues: tRNA (guanine-N(7)-)-methyltransferase (257 aa).

The tract at residues 1–58 is disordered; the sequence is MQPIEQPGTGPDDITPESQDTNTAESAESGAETGHPRRIRSFVRRAGRTSTGQQRAIN. The segment covering 16–26 has biased composition (polar residues); it reads PESQDTNTAES. Over residues 36–47 the composition is skewed to basic residues; it reads PRRIRSFVRRAG. S-adenosyl-L-methionine contacts are provided by Glu89, Glu114, Asp141, and Asp164. The active site involves Asp164. Position 168 (Lys168) interacts with substrate. Residues 170–175 are interaction with RNA; it reads RHNKRR. Substrate contacts are provided by residues Asp200 and 235–238; that span reads TKFE.

It belongs to the class I-like SAM-binding methyltransferase superfamily. TrmB family.

The enzyme catalyses guanosine(46) in tRNA + S-adenosyl-L-methionine = N(7)-methylguanosine(46) in tRNA + S-adenosyl-L-homocysteine. Its pathway is tRNA modification; N(7)-methylguanine-tRNA biosynthesis. In terms of biological role, catalyzes the formation of N(7)-methylguanine at position 46 (m7G46) in tRNA. This is tRNA (guanine-N(7)-)-methyltransferase from Ralstonia pickettii (strain 12J).